The following is a 358-amino-acid chain: Putative myc-like protein MYCLP1 (358 aa).

2 disordered regions span residues 150–171 (ACSR…TVKK) and 219–245 (QEGA…DKED). The span at 227–242 (PPKEALEREAPGGKDD) shows a compositional bias: basic and acidic residues. The bHLH domain occupies 274–326 (WTKKKYHSYLERKRRNDQRSRFLALRDEVPALASCSRVSKVMILVKATEYLHE).

In terms of assembly, efficient DNA binding requires dimerization with another bHLH protein. Binds DNA as a heterodimer with MAX. In terms of tissue distribution, detected in adult testis.

It is found in the nucleus. This Homo sapiens (Human) protein is Putative myc-like protein MYCLP1 (MYCLP1).